The sequence spans 103 residues: Cyclotide vitri-A (103 aa).

The N-terminal stretch at 1–9 (AAFALPAFA) is a signal peptide. Positions 10–69 (SFEKDVITPAALEAVLNRKAPLSNIMMENDAIVNVIANVKTVISNPVLEEALLKTNHGVN) are excised as a propeptide. A cross-link (cyclopeptide (Gly-Asn)) is located at residues 70–99 (GIPCGESCVWIPCITSAIGCSCKSKVCYRN). Intrachain disulfides connect Cys-73-Cys-89, Cys-77-Cys-91, and Cys-82-Cys-96. Positions 100 to 103 (SLDN) are excised as a propeptide.

Post-translationally, this is a cyclic peptide.

Probably participates in a plant defense mechanism. The sequence is that of Cyclotide vitri-A from Viola biflora (Yellow wood violet).